The primary structure comprises 306 residues: uncharacterized protein (306 aa).

The active-site Proton acceptor is Asp-204.

Belongs to the aminoglycoside phosphotransferase family.

This is an uncharacterized protein from Bacillus subtilis (strain 168).